The following is a 3106-amino-acid chain: Cilia- and flagella-associated protein 54 (3106 aa).

3 stretches are compositionally biased toward low complexity: residues 1-24 (MASS…VSPV), 34-48 (STAV…KSSS), and 2356-2368 (ESCS…TSTT). 2 disordered regions span residues 1 to 58 (MASS…THSE) and 2354 to 2374 (PEES…KDDS).

It belongs to the CFAP54 family. Expressed at high level in the testis and at a low level in the lung and brain.

It is found in the cytoplasm. The protein resides in the cytoskeleton. Its subcellular location is the cilium axoneme. Functionally, required for assembly and function of cilia and flagella. In Mus musculus (Mouse), this protein is Cilia- and flagella-associated protein 54.